The primary structure comprises 112 residues: Seminal vesicle secretory protein 4 (112 aa).

The signal sequence occupies residues 1-21 (MKSTSLFLCSLLLLLVTGAIG). The segment at 26-112 (EKYSQSEEVV…RSRFAQDVLN (87 aa)) is disordered. 2 stretches are compositionally biased toward low complexity: residues 36 to 47 (SESFASGPSSGS) and 85 to 97 (RSSG…GESS).

It belongs to the SVP2/SVP5/SVP6 family. In terms of tissue distribution, testis.

It localises to the secreted. The protein resides in the extracellular space. This Rattus norvegicus (Rat) protein is Seminal vesicle secretory protein 4 (Svs4).